A 117-amino-acid chain; its full sequence is Large ribosomal subunit protein bL20 (117 aa).

Belongs to the bacterial ribosomal protein bL20 family.

Its function is as follows. Binds directly to 23S ribosomal RNA and is necessary for the in vitro assembly process of the 50S ribosomal subunit. It is not involved in the protein synthesizing functions of that subunit. The protein is Large ribosomal subunit protein bL20 of Actinobacillus succinogenes (strain ATCC 55618 / DSM 22257 / CCUG 43843 / 130Z).